The chain runs to 163 residues: Campylobacter invasion antigen D (163 aa).

Residues K135–L145 carry the MKD motif.

In terms of assembly, interacts with the host cell protein IQGAP1, thus displacing RACGAP1 from the IQGAP1 complex.

It is found in the secreted. The protein resides in the host cytoplasm. It localises to the host cytosol. Its function is as follows. Effector protein required for the development of acute disease and colon inflammatory lesions. Required for maximal host cell invasion and maximal secretion of the inflammatory chemokine interleukin-8 (IL-8) from host cells. Acts by activating the host MAP kinase signaling pathways ERK-1/2 and p38 to promote both cellular invasion and the release of IL-8. CiaD mediated activation of ERK-1/2 leads to the phosphorylation of host cortactin (CTTN) on serine residues and association of cortactin with N-WASP, promoting actin cytoskeleton rearrangement, membrane ruffling and host cell invasion. In addition, maximal host cell invasion requires interaction with the host cell protein IQGAP1, a Ras GTPase-activating-like protein. Binding to IQGAP1 facilitates the activation of the Rho GTPases RAC1 and CDC42, further promoting actin reorganization and bacterial uptake. CiaD promotes RAC1 activation by excluding RACGAP1 from the IQGAP1 complex, preventing the deactivation of RAC1. CiaD probably activates ERK signaling upstream or independently of IQGAP1. This is Campylobacter invasion antigen D from Campylobacter jejuni subsp. jejuni serotype O:2 (strain ATCC 700819 / NCTC 11168).